We begin with the raw amino-acid sequence, 124 residues long: Protein TAR1 (124 aa).

Positions lysine 80 to isoleucine 124 are disordered. Over residues proline 111 to isoleucine 124 the composition is skewed to polar residues.

The protein resides in the mitochondrion. In terms of biological role, may be involved in mtDNA stability or mitochondrial gene expression regulation at the post-transcriptional level. This is Protein TAR1 (TAR1) from Saccharomyces cerevisiae (strain ATCC 204508 / S288c) (Baker's yeast).